We begin with the raw amino-acid sequence, 347 residues long: Large ribosomal subunit protein uL10 (347 aa).

Residues 310–347 (ATVAAPAAEEEKKEEEPEEEEEDHAEEDGMAGLGALFG) are disordered. Positions 325–338 (EPEEEEEDHAEEDG) are enriched in acidic residues.

This sequence belongs to the universal ribosomal protein uL10 family. In terms of assembly, part of the 50S ribosomal subunit. Forms part of the ribosomal stalk which helps the ribosome interact with GTP-bound translation factors. Forms a heptameric L10(L12)2(L12)2(L12)2 complex, where L10 forms an elongated spine to which the L12 dimers bind in a sequential fashion.

Functionally, forms part of the ribosomal stalk, playing a central role in the interaction of the ribosome with GTP-bound translation factors. This chain is Large ribosomal subunit protein uL10, found in Methanosarcina mazei (strain ATCC BAA-159 / DSM 3647 / Goe1 / Go1 / JCM 11833 / OCM 88) (Methanosarcina frisia).